A 349-amino-acid chain; its full sequence is 26S proteasome non-ATPase regulatory subunit 4 (349 aa).

Residues 5–188 enclose the VWFA domain; sequence ATIVCLDNSE…LSDIILQSPI (184 aa). The region spanning 204–223 is the UIM 1 domain; that stretch reads DTDPDLAMALKLSLEEEKQR. Positions 219–234 are enriched in basic and acidic residues; sequence EEKQRQERERKAREEA. Disordered regions lie at residues 219–257 and 274–349; these read EEKQ…MDVN and TDKM…NEKK. A compositionally biased stretch (low complexity) spans 235–253; sequence NGGSTNSGTTTTTAPTESN. Residues 259–278 form the UIM 2 domain; sequence EDDPELAEALALSMATDKME. Residues 280–301 are compositionally biased toward low complexity; the sequence is QSSTTNTDSQPPQQQQQPPTDD. A compositionally biased stretch (basic and acidic residues) spans 335-349; that stretch reads LSKKDEDKDKDNEKK.

It belongs to the proteasome subunit S5A family. In terms of assembly, the 26S proteasome is composed of a core protease, known as the 20S proteasome, capped at one or both ends by the 19S regulatory complex (RC). The RC is composed of at least 18 different subunits in two subcomplexes, the base and the lid, which form the portions proximal and distal to the 20S proteolytic core, respectively.

Its function is as follows. Binds and presumably selects ubiquitin-conjugates for destruction. The protein is 26S proteasome non-ATPase regulatory subunit 4 (psmD4) of Dictyostelium discoideum (Social amoeba).